The sequence spans 342 residues: Lipopolysaccharide heptosyltransferase 1 (342 aa).

ADP-L-glycero-beta-D-manno-heptose-binding residues include S188, S189, K193, E225, D268, S269, G270, and H273.

This sequence belongs to the glycosyltransferase 9 family.

It is found in the cell inner membrane. The enzyme catalyses an alpha-Kdo-(2-&gt;4)-alpha-Kdo-(2-&gt;6)-lipid A + ADP-L-glycero-beta-D-manno-heptose = an L-alpha-D-Hep-(1-&gt;5)-[alpha-Kdo-(2-&gt;4)]-alpha-Kdo-(2-&gt;6)-lipid A + ADP + H(+). It participates in bacterial outer membrane biogenesis; LPS core biosynthesis. Glycosyltransferase involved in the biosynthesis of the core oligosaccharide region of lipopolysaccharide (LPS). Catalyzes the addition of the first heptose unit to one 3-deoxy-D-manno-octulosonic acid (Kdo) residue of the Kdo2-lipid A module. This is Lipopolysaccharide heptosyltransferase 1 from Campylobacter coli.